The sequence spans 1058 residues: SIT4-associating protein SAP185 (1058 aa).

Lys20 participates in a covalent cross-link: Glycyl lysine isopeptide (Lys-Gly) (interchain with G-Cter in ubiquitin). Disordered regions lie at residues Thr34–Glu71, Ser135–Glu202, Asn513–Asp556, Cys818–Gln862, Thr873–Glu892, and Glu934–Asp992. A compositionally biased stretch (polar residues) spans Asp42–Phe55. 2 stretches are compositionally biased toward basic and acidic residues: residues Ser135 to Lys146 and Glu153 to Gly175. Residues Glu176–Ser189 are compositionally biased toward acidic residues. Positions Glu190 to Glu202 are enriched in basic and acidic residues. 2 stretches are compositionally biased toward acidic residues: residues Glu528 to Asn546 and Glu820 to Pro837. Basic and acidic residues predominate over residues Gln838 to Glu861. Polar residues predominate over residues Glu934–Phe963. The span at Phe967–Tyr991 shows a compositional bias: basic and acidic residues.

The protein belongs to the SAPS family. Hyperphosphorylated in the absence of SIT4.

Associates with the SIT4 phosphatase in a cell cycle dependent manner. May be directly or indirectly involved in SIT4-dependent functions in budding and in normal G1 cyclin expression. The polypeptide is SIT4-associating protein SAP185 (SAP185) (Saccharomyces cerevisiae (strain ATCC 204508 / S288c) (Baker's yeast)).